The following is a 487-amino-acid chain: L-asparagine permease 2 (487 aa).

Helical transmembrane passes span 26–46 (QLQM…GAGG), 50–70 (SAGP…FLIL), 98–118 (VAFV…IVDT), 133–153 (PIPQ…MNLI), 163–183 (FWAS…GTVF), 214–234 (IVLV…VGIA), 256–276 (IACF…YTAY), 290–310 (IGID…ALSS), 341–361 (TGVP…GIIL), 369–389 (AFEI…ATIV), 414–434 (SPFS…LMYF), and 440–460 (PWMI…WYLV).

Belongs to the amino acid-polyamine-organocation (APC) superfamily. Amino acid transporter (AAT) (TC 2.A.3.1) family.

It localises to the cell membrane. Dual function in both nitrogen assimilation and in protection against acid stress during infection. Involved in asparagine uptake. The polypeptide is L-asparagine permease 2 (ansP2) (Mycobacterium bovis (strain ATCC BAA-935 / AF2122/97)).